A 148-amino-acid polypeptide reads, in one-letter code: Large ribosomal subunit protein cL37 (148 aa).

Residues 1 to 65 constitute a chloroplast transit peptide; that stretch reads MALLCFNSLP…SSHGRIVVKA (65 aa). Alanine 66 bears the N-acetylalanine mark. The segment at 125–148 is disordered; it reads LVRKRKMRKKGRWPPSKMKKNKNV.

This sequence belongs to the chloroplast-specific ribosomal protein cL37 family. In terms of assembly, part of the 50S ribosomal subunit.

The protein resides in the plastid. It localises to the chloroplast. This Arabidopsis thaliana (Mouse-ear cress) protein is Large ribosomal subunit protein cL37 (PSRP5).